A 345-amino-acid chain; its full sequence is N-acetyl-gamma-glutamyl-phosphate reductase (345 aa).

Residue C149 is part of the active site.

This sequence belongs to the NAGSA dehydrogenase family. Type 1 subfamily.

It is found in the cytoplasm. The enzyme catalyses N-acetyl-L-glutamate 5-semialdehyde + phosphate + NADP(+) = N-acetyl-L-glutamyl 5-phosphate + NADPH + H(+). The protein operates within amino-acid biosynthesis; L-arginine biosynthesis; N(2)-acetyl-L-ornithine from L-glutamate: step 3/4. In terms of biological role, catalyzes the NADPH-dependent reduction of N-acetyl-5-glutamyl phosphate to yield N-acetyl-L-glutamate 5-semialdehyde. In Bacillus cereus (strain ATCC 10987 / NRS 248), this protein is N-acetyl-gamma-glutamyl-phosphate reductase.